Reading from the N-terminus, the 1356-residue chain is Collagen alpha-2(I) chain (1356 aa).

A signal peptide spans 1-22 (MLSFVDNRILLLLAVTSLLASC). The segment at 22-1112 (CQSGGLKGPR…DQSGGYDEYR (1091 aa)) is disordered. Residues Gln23 and Gln73 each carry the pyrrolidone carboxylic acid modification. Residues 23–72 (QSGGLKGPRGAKGPRGDRGPQGPNGRDGKAGLPGIAGPPGPPGLGGNFAA) constitute a propeptide, N-terminal propeptide. Over residues 76–88 (GGKGSDPGPGPMG) the composition is skewed to gly residues. Lys78 carries the allysine modification. The residue at position 171 (Lys171) is a 5-hydroxylysine; alternate. A glycan (O-linked (Gal...) hydroxylysine; alternate) is linked at Lys171. Over residues 219-248 (AGPAGPAGARGADGSTGPAGPAGPLGAAGP) the composition is skewed to low complexity. Residues 259–280 (GEIGGAGSNGPSGPQGGRGEPG) show a composition bias toward gly residues. A compositionally biased stretch (low complexity) spans 281–315 (INGAVGPVGPVGNPGNNGINGAKGAAGLPGVAGAP). Pro residues predominate over residues 317–327 (FPGPRGGPGPQ). Composition is skewed to gly residues over residues 334–343 (GARGLGGDPG), 391–412 (GARGGAGTRGLPGLEGRGGPIG), 418–427 (GATGPGGIRG), and 448–457 (GNSGQGGPPG). Positions 479–489 (PRGQPGNIGFP) are enriched in low complexity. The segment covering 511-520 (GLRGGPGADG) has biased composition (gly residues). Low complexity-rich tracts occupy residues 521-564 (NNGA…AGKA) and 587-603 (NSGPAGSAGSQGAIGAR). 2 stretches are compositionally biased toward gly residues: residues 610–619 (GPDGGKGEPG) and 628–646 (GHQGPGGMPGERGAGGTPG). The span at 648–659 (KGEKGEGGHRGL) shows a compositional bias: basic and acidic residues. The span at 716-731 (LPGFAGPPGSDGQSGP) shows a compositional bias: low complexity. Gly residues predominate over residues 736 to 745 (GPAGGKGDVG). 2 stretches are compositionally biased toward low complexity: residues 746–764 (PAGPAGPSGQSGPSGASGP) and 776–786 (PSGLTGFPGAA). Over residues 787–796 (GRVGGPGPAG) the composition is skewed to gly residues. Low complexity predominate over residues 797–809 (IAGPPGSAGPAGK). Over residues 817-826 (GDPGPGGPQG) the composition is skewed to gly residues. The span at 827–858 (EQGVVGPAGISGDKGPSGESGPPGAPGTAGPQ) shows a compositional bias: low complexity. Gly residues predominate over residues 877-886 (GLPGGPGAVG). The segment covering 888–903 (PGRLGPAGASGPRGPA) has biased composition (low complexity). Residues 976-985 (GPTGNGGPVG) are compositionally biased toward gly residues. Positions 999–1013 (RGEKGGAGEKGDRGM) are enriched in basic and acidic residues. The span at 1083 to 1095 (AGPPGSPGLPGPA) shows a compositional bias: pro residues. The propeptide at 1114–1356 (DQPSFRAKDY…GLDIGPVCFK (243 aa)) is C-terminal propeptide. One can recognise a Fibrillar collagen NC1 domain in the interval 1123 to 1356 (YEVDATIKSL…GLDIGPVCFK (234 aa)). 3 disulfides stabilise this stretch: Cys1153–Cys1185, Cys1193–Cys1354, and Cys1262–Cys1307. Ca(2+) is bound by residues Asp1171, Asn1173, Gln1174, Cys1176, and Asp1179. N-linked (GlcNAc...) asparagine glycosylation is present at Asn1257.

The protein belongs to the fibrillar collagen family. Trimers of one alpha 2(I) and two alpha 1(I) chains. In terms of processing, prolines at the third position of the tripeptide repeating unit (G-X-Y) are hydroxylated in some or all of the chains. In terms of tissue distribution, forms the fibrils of tendon, ligaments and bones. In bones the fibrils are mineralized with calcium hydroxyapatite.

The protein resides in the secreted. It is found in the extracellular space. It localises to the extracellular matrix. Type I collagen is a member of group I collagen (fibrillar forming collagen). The protein is Collagen alpha-2(I) chain (col1a2) of Oncorhynchus mykiss (Rainbow trout).